Reading from the N-terminus, the 501-residue chain is Glutathione gamma-glutamylcysteinyltransferase 1 (501 aa).

Residues 1–221 form the Peptidase C83 domain; sequence MAMAGLYRRL…GFMLISRPHR (221 aa). Catalysis depends on residues Cys-56, His-162, and Asp-180.

This sequence belongs to the phytochelatin synthase family. In terms of tissue distribution, expressed in roots, nodules and leaves.

The enzyme catalyses [Glu(-Cys)](n)-Gly + glutathione + H(+) = [Glu(-Cys)](n+1)-Gly + glycine. With respect to regulation, requires cadmium for activity. Also activated in vitro by Zn(2+), Cu(2+), Fe(2+) or Fe(3+) ions, but not by Co(2+) or Ni(2+) ions. In terms of biological role, involved in the synthesis of phytochelatins (PC) and homophytochelatins (hPC), the heavy-metal-binding peptides of plants. This is Glutathione gamma-glutamylcysteinyltransferase 1 (PCS1) from Lotus japonicus (Lotus corniculatus var. japonicus).